Here is a 121-residue protein sequence, read N- to C-terminus: UPF0102 protein AAur_2443 (121 aa).

The protein belongs to the UPF0102 family.

In Paenarthrobacter aurescens (strain TC1), this protein is UPF0102 protein AAur_2443.